A 127-amino-acid polypeptide reads, in one-letter code: MAYAIIEASGKQLWVEPGRFYDLDRLDADLDQSLTLDKVLLVQDEGAPQIGQPYVAGATVQVTVLSHPRGRKVTVYKMKPKKKTRKKQGHRQDLTRVLVESITVGGKVLTANAADLPKSEADIDAAG.

The protein belongs to the bacterial ribosomal protein bL21 family. Part of the 50S ribosomal subunit. Contacts protein L20.

Functionally, this protein binds to 23S rRNA in the presence of protein L20. This chain is Large ribosomal subunit protein bL21, found in Synechococcus elongatus (strain ATCC 33912 / PCC 7942 / FACHB-805) (Anacystis nidulans R2).